The sequence spans 397 residues: Elongation factor Tu (397 aa).

In terms of domain architecture, tr-type G spans 10 to 207; it reads KPHVNIGTIG…AVDESIPEPV (198 aa). The segment at 19-26 is G1; the sequence is GHVDHGKT. GTP is bound at residue 19–26; it reads GHVDHGKT. Thr26 contacts Mg(2+). The interval 63–67 is G2; the sequence is GITIN. The G3 stretch occupies residues 84-87; it reads DAPG. Residues 84 to 88 and 139 to 142 each bind GTP; these read DAPGH and NKSD. Residues 139–142 are G4; that stretch reads NKSD. A G5 region spans residues 177–179; that stretch reads SGL.

This sequence belongs to the TRAFAC class translation factor GTPase superfamily. Classic translation factor GTPase family. EF-Tu/EF-1A subfamily. Monomer.

The protein resides in the cytoplasm. The catalysed reaction is GTP + H2O = GDP + phosphate + H(+). GTP hydrolase that promotes the GTP-dependent binding of aminoacyl-tRNA to the A-site of ribosomes during protein biosynthesis. The protein is Elongation factor Tu of Clavibacter michiganensis subsp. michiganensis (strain NCPPB 382).